The chain runs to 72 residues: DNA-directed RNA polymerase subunit omega (72 aa).

The protein belongs to the RNA polymerase subunit omega family. As to quaternary structure, the RNAP catalytic core consists of 2 alpha, 1 beta, 1 beta' and 1 omega subunit. When a sigma factor is associated with the core the holoenzyme is formed, which can initiate transcription.

The catalysed reaction is RNA(n) + a ribonucleoside 5'-triphosphate = RNA(n+1) + diphosphate. In terms of biological role, promotes RNA polymerase assembly. Latches the N- and C-terminal regions of the beta' subunit thereby facilitating its interaction with the beta and alpha subunits. This is DNA-directed RNA polymerase subunit omega from Limosilactobacillus reuteri (strain DSM 20016) (Lactobacillus reuteri).